Consider the following 655-residue polypeptide: p-hydroxybenzoic acid efflux pump subunit AaeB (655 aa).

The Periplasmic portion of the chain corresponds to 1–12; it reads MGIFSIANQHIR. A helical transmembrane segment spans residues 13–33; the sequence is FAVKLACAIVLALFIGFHFQL. Residues 34 to 37 lie on the Cytoplasmic side of the membrane; it reads ETPR. A helical transmembrane segment spans residues 38 to 58; it reads WAVLTAAIVAAGPAFAAGGEP. At 59–68 the chain is on the periplasmic side; sequence YSGAIRYRGM. Residues 69–89 traverse the membrane as a helical segment; the sequence is LRIIGTFIGCIAALIIIISMI. Residues 90–92 lie on the Cytoplasmic side of the membrane; that stretch reads RAP. The chain crosses the membrane as a helical span at residues 93-113; the sequence is LLMILVCCVWVGFCTWISSLV. Topologically, residues 114-120 are periplasmic; the sequence is RIENSYA. The chain crosses the membrane as a helical span at residues 121–141; the sequence is WGLSGYTALIIVITIQTEPLL. Residues 142–151 lie on the Cytoplasmic side of the membrane; the sequence is TPQFALERCS. The chain crosses the membrane as a helical span at residues 152–172; the sequence is EIVIGIGCAILADLLFSPRSI. The Periplasmic segment spans residues 173–369; that stretch reads KQEVDRELDS…RTTLSCILGT (197 aa). The chain crosses the membrane as a helical span at residues 370–390; it reads LFWLWTGWTSGNGEMVMIAVV. Residues 391–406 are Cytoplasmic-facing; the sequence is TSLAMRLPNPRMVCID. Residues 407–427 traverse the membrane as a helical segment; the sequence is FIYGTLAALPLGLLYFLVIIP. Residues 428-430 lie on the Periplasmic side of the membrane; the sequence is NTQ. A helical transmembrane segment spans residues 431-451; the sequence is QSMLLLCLSLAVLGFFIGIEV. Residues 452-458 are Cytoplasmic-facing; sequence QKRRLGS. The helical transmembrane segment at 459–479 threads the bilayer; that stretch reads MGALASTINIIVLDNPMTFHF. Residues 480 to 481 lie on the Periplasmic side of the membrane; it reads SQ. The chain crosses the membrane as a helical span at residues 482–502; that stretch reads FLDSALGQIVGCMLAFIVILL. At 503 to 655 the chain is on the cytoplasmic side; it reads VRDKSKDRTG…HKYQNALTDS (153 aa).

It belongs to the aromatic acid exporter ArAE (TC 2.A.85) family.

It localises to the cell inner membrane. Its function is as follows. Forms an efflux pump with AaeA. Could function as a metabolic relief valve, allowing to eliminate certain compounds when they accumulate to high levels in the cell. This chain is p-hydroxybenzoic acid efflux pump subunit AaeB, found in Salmonella paratyphi A (strain ATCC 9150 / SARB42).